The sequence spans 320 residues: Cytochrome f (320 aa).

A signal peptide spans 1 to 35 (MQMRNTFSWIKEEIIRFIAVSLIIYIITRAPISNA). Residues Tyr36, Cys56, Cys59, and His60 each coordinate heme. Residues 286–306 (VQGLLLFLASIILAQIFLVLK) form a helical membrane-spanning segment.

This sequence belongs to the cytochrome f family. In terms of assembly, the 4 large subunits of the cytochrome b6-f complex are cytochrome b6, subunit IV (17 kDa polypeptide, petD), cytochrome f and the Rieske protein, while the 4 small subunits are PetG, PetL, PetM and PetN. The complex functions as a dimer. Heme serves as cofactor.

The protein localises to the plastid. The protein resides in the chloroplast thylakoid membrane. Functionally, component of the cytochrome b6-f complex, which mediates electron transfer between photosystem II (PSII) and photosystem I (PSI), cyclic electron flow around PSI, and state transitions. This is Cytochrome f from Morus indica (Mulberry).